The primary structure comprises 350 residues: Adenine deaminase (350 aa).

His-24, His-26, and His-207 together coordinate Zn(2+). Glu-210 serves as the catalytic Proton donor. Asp-288 contacts Zn(2+). Asp-289 serves as a coordination point for substrate.

Belongs to the metallo-dependent hydrolases superfamily. Adenosine and AMP deaminases family. Adenine deaminase type 2 subfamily. The cofactor is Zn(2+).

The enzyme catalyses adenine + H2O + H(+) = hypoxanthine + NH4(+). Its function is as follows. Catalyzes the hydrolytic deamination of adenine to hypoxanthine. Plays an important role in the purine salvage pathway and in nitrogen catabolism. In Paraburkholderia phytofirmans (strain DSM 17436 / LMG 22146 / PsJN) (Burkholderia phytofirmans), this protein is Adenine deaminase.